A 27-amino-acid polypeptide reads, in one-letter code: Morintide mO5 (27 aa).

A Chitin-binding type-1 domain is found at 1–27 (NGLCCSQYGFCGTTSQYCSRANGCQSN). The cysteines at positions 4 and 18 are disulfide-linked.

As to expression, seeds (at protein level).

Its function is as follows. Chitin-binding protein which functions in defense against chitin-containing fungal pathogens. The polypeptide is Morintide mO5 (Moringa oleifera (Horseradish tree)).